Here is a 226-residue protein sequence, read N- to C-terminus: Cytidylate kinase (226 aa).

10 to 18 (GPASSGKST) serves as a coordination point for ATP.

Belongs to the cytidylate kinase family. Type 1 subfamily.

It is found in the cytoplasm. It carries out the reaction CMP + ATP = CDP + ADP. The catalysed reaction is dCMP + ATP = dCDP + ADP. This Streptococcus pyogenes serotype M18 (strain MGAS8232) protein is Cytidylate kinase.